A 290-amino-acid chain; its full sequence is Fructose-1,6-bisphosphatase class 1 (290 aa).

Residues Glu78, Asp96, Leu98, and Asp99 each coordinate Mg(2+). Residues 99–102 (DGSS), Tyr201, and Lys226 each bind substrate. Residue Glu232 coordinates Mg(2+).

The protein belongs to the FBPase class 1 family. In terms of assembly, homotetramer. The cofactor is Mg(2+).

It is found in the cytoplasm. It carries out the reaction beta-D-fructose 1,6-bisphosphate + H2O = beta-D-fructose 6-phosphate + phosphate. The protein operates within carbohydrate biosynthesis; gluconeogenesis. This chain is Fructose-1,6-bisphosphatase class 1, found in Helicobacter pylori (strain Shi470).